The chain runs to 904 residues: MCFLRRPGAPASWIWWRMLRQVLRRGLQSFCHRLGLCVSRHPVFFLTVPAVLTITFGLSALNRFQTEGDLERLVAPSHSLAKIERSLASSLFPLDQSKSQLYSDLHTPGRYGRVILLSSPGDNILLQAEGILQTHRAVMEMKVNHKGYNYTFSHLCVLRNQDKKCVLDDIISVLEDLRQAAVSNKTTARVQVRYPNTKLKDGRNSFIGHQLGGVVEVPNSKDQRVKSARAIQITYYLQTYGSATQDLIGEKWENEFCKLMRKLQEEHQDLQLYSLASFSLWRDFHKTSILTRSKVLVSLVLILTTATLSSSMKDCLRSKPFLGLLGVLTVCISIATAAGIFFITDGKYNSTLLGIPFFAMGHGTKGVFELLSGWRRTKENLPFKDRVADAYSDVMVTYTMTSSLYFITFGMGASPFTNIEAVKIFCQNMCVSILLNYFYIFSFFGSCLVFAGQLEQNRYHSIFCCKIPSAEYLDRKPVWFQTVMSDGHQQTSHHETNPYQHHFIQHFLREHYNEWITNIYVKPFVVILYLIYASFSFMGCLQISDGASIINLLASDSPSVSYAMVQQKYFSNYSPVIGFYVYEPLEYWNSSVQEDLQRLCSGFTAVSWVEQYYQFLKTSNISANNKTDFISVLQSSFLKKPEFQHFRNDIIFSRAGDENNIIASRLYLVARTSRDKQKEVIEVLDKLRPLSLSKSIRFIVFNPSFVFTDHYSLSVTVPVLIAGFGVLLVLILTFFLVIHPLGNFWLILSVTSIELGVLGLMTLWNVDMDCISILCLIYTLNFAIDHCAPLLYTFVLATEHTRTQCIKSSLQEHGTAILQNITSFLIGLLPLLFVPSNLTFTLFKCLLLTGGCTLLHCFVILPVFLTFFPPSKKHHKKKKRAKRKEREEIECIEIQENPDHVTTV.

Residues 41–61 (HPVFFLTVPAVLTITFGLSAL) form a helical membrane-spanning segment. An N-linked (GlcNAc...) asparagine glycan is attached at N149. Residues 291–450 (TRSKVLVSLV…FSFFGSCLVF (160 aa)) form the SSD domain. Transmembrane regions (helical) follow at residues 295 to 312 (VLVS…SSSM), 323 to 343 (GLLG…IFFI), 351 to 371 (TLLG…FELL), 394 to 414 (VMVT…MGAS), 431 to 451 (VSIL…LVFA), and 523 to 543 (PFVV…CLQI). An N-linked (GlcNAc...) asparagine glycan is attached at N625. The next 3 helical transmembrane spans lie at 718-738 (PVLI…FLVI), 744-764 (FWLI…MTLW), and 771-791 (ISIL…APLL). N-linked (GlcNAc...) asparagine glycosylation is present at N820. A run of 2 helical transmembrane segments spans residues 823–843 (SFLI…FTLF) and 845–865 (CLLL…PVFL).

Belongs to the patched family.

The protein localises to the membrane. Functionally, could act as a repressor of canonical hedgehog signaling by antagonizing the effects of SMO, as suggested by down-regulation of hedgehog target genes, including GLI1, PTCH1, and PTCH2 in PTCHD4-expressing cells. This Mus musculus (Mouse) protein is Patched domain-containing protein 4 (Ptchd4).